The primary structure comprises 203 residues: Dual specificity phosphatase 29 (203 aa).

In terms of domain architecture, Tyrosine-protein phosphatase spans 47–193 (HVNQVWPRIY…LRALDIALQE (147 aa)). 137–144 (HCVMGRSR) is a binding site for substrate. The active-site Phosphocysteine intermediate is the Cys138.

It belongs to the protein-tyrosine phosphatase family. Non-receptor class dual specificity subfamily.

It is found in the cytoplasm. The protein localises to the nucleus. It carries out the reaction O-phospho-L-tyrosyl-[protein] + H2O = L-tyrosyl-[protein] + phosphate. The catalysed reaction is O-phospho-L-seryl-[protein] + H2O = L-seryl-[protein] + phosphate. It catalyses the reaction O-phospho-L-threonyl-[protein] + H2O = L-threonyl-[protein] + phosphate. Its function is as follows. Dual specificity phosphatase able to dephosphorylate phosphotyrosine, phosphoserine and phosphothreonine residues within the same substrate, with a preference for phosphotyrosine as a substrate. Involved in the modulation of AMPK and MAPK1/2 signaling pathways. In Oryzias latipes (Japanese rice fish), this protein is Dual specificity phosphatase 29 (dusp29).